A 270-amino-acid polypeptide reads, in one-letter code: MTRRVQYRHFLWPRPRLDAIDWLMSDASYRDAIFSTPLDRVANFSFDEKVVACFPDMIRRSVPGYGQILGMLGLIAERHLRFGAHVYDLGCSLGAVTLALAGRLPPDAFTLTGVDLSPTMVARARETLGEECPDHRIDIVEGDIRHVDYRPAGMIVLNFTLQFLPPEDRRAVIERLYAALEPGGVLVLSEKIVLPDEQENAWLVERYHDFKRANGYSDMEISQKRTALENVLVPDTLDAHHERLHEAGFTRVSTWFQYLNFASMVAFKDA.

Residues Tyr-65, 90 to 92, 143 to 144, Asn-158, and Arg-225 each bind S-adenosyl-L-methionine; these read GCS and DI.

This sequence belongs to the class I-like SAM-binding methyltransferase superfamily. Cx-SAM synthase family. In terms of assembly, homodimer.

It catalyses the reaction prephenate + S-adenosyl-L-methionine = carboxy-S-adenosyl-L-methionine + 3-phenylpyruvate + H2O. Its function is as follows. Catalyzes the conversion of S-adenosyl-L-methionine (SAM) to carboxy-S-adenosyl-L-methionine (Cx-SAM). The polypeptide is Carboxy-S-adenosyl-L-methionine synthase (Chromohalobacter salexigens (strain ATCC BAA-138 / DSM 3043 / CIP 106854 / NCIMB 13768 / 1H11)).